Here is a 252-residue protein sequence, read N- to C-terminus: Chitooligosaccharide deacetylase (252 aa).

Residues H61 and H125 each coordinate Mg(2+).

It belongs to the YdjC deacetylase family. ChbG subfamily. Homodimer. Mg(2+) is required as a cofactor.

Its subcellular location is the cytoplasm. The enzyme catalyses N,N'-diacetylchitobiose + H2O = N-acetyl-beta-D-glucosaminyl-(1-&gt;4)-D-glucosamine + acetate. It carries out the reaction diacetylchitobiose-6'-phosphate + H2O = N'-monoacetylchitobiose-6'-phosphate + acetate. It functions in the pathway glycan degradation; chitin degradation. In terms of biological role, involved in the degradation of chitin. ChbG is essential for growth on the acetylated chitooligosaccharides chitobiose and chitotriose but is dispensable for growth on cellobiose and chitosan dimer, the deacetylated form of chitobiose. Deacetylation of chitobiose-6-P and chitotriose-6-P is necessary for both the activation of the chb promoter by the regulatory protein ChbR and the hydrolysis of phosphorylated beta-glucosides by the phospho-beta-glucosidase ChbF. Catalyzes the removal of only one acetyl group from chitobiose-6-P to yield monoacetylchitobiose-6-P, the inducer of ChbR and the substrate of ChbF. The polypeptide is Chitooligosaccharide deacetylase (Citrobacter koseri (strain ATCC BAA-895 / CDC 4225-83 / SGSC4696)).